Here is a 211-residue protein sequence, read N- to C-terminus: Dual specificity protein phosphatase 26 (211 aa).

Residues 60-207 (NHADEVWPGL…LLALDRRLRQ (148 aa)) form the Tyrosine-protein phosphatase domain. Cysteine 152 acts as the Phosphocysteine intermediate in catalysis.

Belongs to the protein-tyrosine phosphatase family. Non-receptor class dual specificity subfamily. Interacts with HSF4. In terms of tissue distribution, brain and skeletal muscle. In the brain it is expressed ubiquitously except in the hippocampus.

The protein resides in the cytoplasm. It localises to the nucleus. It is found in the golgi apparatus. The catalysed reaction is O-phospho-L-tyrosyl-[protein] + H2O = L-tyrosyl-[protein] + phosphate. It carries out the reaction O-phospho-L-seryl-[protein] + H2O = L-seryl-[protein] + phosphate. The enzyme catalyses O-phospho-L-threonyl-[protein] + H2O = L-threonyl-[protein] + phosphate. Its function is as follows. Inactivates MAPK1 and MAPK3 which leads to dephosphorylation of heat shock factor protein 4 and a reduction in its DNA-binding activity. This is Dual specificity protein phosphatase 26 (Dusp26) from Mus musculus (Mouse).